We begin with the raw amino-acid sequence, 420 residues long: Carboxypeptidase A4 (420 aa).

Positions 1 to 16 are cleaved as a signal peptide; that stretch reads MKWLLFFGALIGAGIC. Positions 17 to 113 are cleaved as a propeptide — activation peptide; sequence GRDKFFGDQV…EMQHNEGIER (97 aa). A protein is bound by residues Pro69, Val71, Asn118, Tyr122, His123, Glu126, and Phe162. In terms of domain architecture, Peptidase M14 spans 121–415; sequence AYHPLEAIYH…LGLKTIMEHV (295 aa). Zn(2+) contacts are provided by His180 and Glu183. A disulfide bridge connects residues Cys249 and Cys272. Asn259 carries N-linked (GlcNAc...) asparagine glycosylation. Residue His307 participates in Zn(2+) binding. The Proton donor/acceptor role is filled by Glu381.

The protein belongs to the peptidase M14 family. Interacts with LXN. The cofactor is Zn(2+).

Its subcellular location is the secreted. Metalloprotease that cleaves hydrophobic C-terminal residues with a preference for -Phe, -Leu, -Ile, -Met, -Tyr and -Val. May function in peptide hormone and/or neuropeptide catabolism. In Mus musculus (Mouse), this protein is Carboxypeptidase A4 (Cpa4).